A 495-amino-acid chain; its full sequence is Glycerol kinase (495 aa).

ADP is bound at residue Thr11. Positions 11, 12, and 13 each coordinate ATP. Thr11 is a binding site for sn-glycerol 3-phosphate. Arg15 lines the ADP pocket. The sn-glycerol 3-phosphate site is built by Arg81, Glu82, Tyr133, and Asp242. Residues Arg81, Glu82, Tyr133, Asp242, and Gln243 each contribute to the glycerol site. ADP is bound by residues Thr264 and Gly307. ATP-binding residues include Thr264, Gly307, Gln311, and Gly408. Gly408 serves as a coordination point for ADP.

It belongs to the FGGY kinase family.

It carries out the reaction glycerol + ATP = sn-glycerol 3-phosphate + ADP + H(+). Its pathway is polyol metabolism; glycerol degradation via glycerol kinase pathway; sn-glycerol 3-phosphate from glycerol: step 1/1. Its activity is regulated as follows. Inhibited by fructose 1,6-bisphosphate (FBP). Its function is as follows. Key enzyme in the regulation of glycerol uptake and metabolism. Catalyzes the phosphorylation of glycerol to yield sn-glycerol 3-phosphate. This is Glycerol kinase from Geobacter sp. (strain M21).